The sequence spans 377 residues: uncharacterized protein (377 aa).

Residues 1-23 (MLKFRNFFKLTLLTLASAFFLSG) form the signal peptide. Cys-24 carries N-palmitoyl cysteine lipidation. Cys-24 carries S-diacylglycerol cysteine lipidation.

It is found in the cell membrane. This is an uncharacterized protein from Mycoplasma genitalium (strain ATCC 33530 / DSM 19775 / NCTC 10195 / G37) (Mycoplasmoides genitalium).